The chain runs to 136 residues: Large ribosomal subunit protein uL16 (136 aa).

This sequence belongs to the universal ribosomal protein uL16 family. As to quaternary structure, part of the 50S ribosomal subunit.

In terms of biological role, binds 23S rRNA and is also seen to make contacts with the A and possibly P site tRNAs. This chain is Large ribosomal subunit protein uL16, found in Ehrlichia ruminantium (strain Gardel).